The primary structure comprises 518 residues: Chromosomal replication initiator protein DnaA (518 aa).

The interval 1-76 (METDGGDFPS…RALSEAYGSP (76 aa)) is domain I, interacts with DnaA modulators. Residues 76-176 (PIRLAVTVDP…RRPTTRIENS (101 aa)) are domain II. The interval 91–174 (LTPERTGEHS…QPRRPTTRIE (84 aa)) is disordered. The segment covering 124–135 (DGLHLDERRSGS) has biased composition (basic and acidic residues). Residues 136–147 (LEEDSPLDDSDP) are compositionally biased toward acidic residues. Residues 177–393 (RLNPKYIFET…GALIRVTAFA (217 aa)) form a domain III, AAA+ region region. The ATP site is built by Gly221, Gly223, Lys224, and Thr225. A domain IV, binds dsDNA region spans residues 394–518 (SLNRQPVDMQ…TNRIKKQSGA (125 aa)).

The protein belongs to the DnaA family. Oligomerizes as a right-handed, spiral filament on DNA at oriC.

It is found in the cytoplasm. In terms of biological role, plays an essential role in the initiation and regulation of chromosomal replication. ATP-DnaA binds to the origin of replication (oriC) to initiate formation of the DNA replication initiation complex once per cell cycle. Binds the DnaA box (a 9 base pair repeat at the origin) and separates the double-stranded (ds)DNA. Forms a right-handed helical filament on oriC DNA; dsDNA binds to the exterior of the filament while single-stranded (ss)DNA is stabiized in the filament's interior. The ATP-DnaA-oriC complex binds and stabilizes one strand of the AT-rich DNA unwinding element (DUE), permitting loading of DNA polymerase. After initiation quickly degrades to an ADP-DnaA complex that is not apt for DNA replication. Binds acidic phospholipids. The protein is Chromosomal replication initiator protein DnaA of Kineococcus radiotolerans (strain ATCC BAA-149 / DSM 14245 / SRS30216).